We begin with the raw amino-acid sequence, 132 residues long: Aspartate 1-decarboxylase (132 aa).

Serine 25 serves as the catalytic Schiff-base intermediate with substrate; via pyruvic acid. Serine 25 carries the pyruvic acid (Ser) modification. A substrate-binding site is contributed by threonine 57. Tyrosine 58 (proton donor) is an active-site residue. 73–75 (GAA) serves as a coordination point for substrate.

Belongs to the PanD family. As to quaternary structure, heterooctamer of four alpha and four beta subunits. Pyruvate is required as a cofactor. Is synthesized initially as an inactive proenzyme, which is activated by self-cleavage at a specific serine bond to produce a beta-subunit with a hydroxyl group at its C-terminus and an alpha-subunit with a pyruvoyl group at its N-terminus.

The protein localises to the cytoplasm. It carries out the reaction L-aspartate + H(+) = beta-alanine + CO2. It participates in cofactor biosynthesis; (R)-pantothenate biosynthesis; beta-alanine from L-aspartate: step 1/1. Its function is as follows. Catalyzes the pyruvoyl-dependent decarboxylation of aspartate to produce beta-alanine. The chain is Aspartate 1-decarboxylase from Geotalea uraniireducens (strain Rf4) (Geobacter uraniireducens).